The chain runs to 1088 residues: Myocardin-related transcription factor B (1088 aa).

The residue at position 22 (glutamate 22) is a Phosphoserine. The RPEL 1 repeat unit spans residues 40-65 (EVLQLRLQQRRTREQLVDQGIMPPLK). Phosphoserine is present on serine 66. RPEL repeat units follow at residues 84–109 (NFLKHKIRSRPDRSELVRMHILEETF) and 128–153 (DDLNEKIAQRPGPMELVEKNILPVDS). 4 disordered regions span residues 165-310 (EDYP…NEPQ), 349-389 (KPLN…PSSL), 472-508 (AELPPTGTSNATRVENVHSPLPISPSPSEQSSLSTDD), and 528-553 (LSSSPLRMTNNEDSLSPTSSTLSNLE). Residues 197-213 (SAASPSEPKVSESPSPV) show a composition bias toward low complexity. A compositionally biased stretch (polar residues) spans 214–226 (TTNTPAQFASVSP). The span at 238–248 (ADQPPPRPAAP) shows a compositional bias: pro residues. Basic and acidic residues predominate over residues 272–287 (NPNDKHRSKKCKDPKP). Over residues 355–366 (NSNSGNSALNNA) the composition is skewed to low complexity. 2 positions are modified to phosphothreonine: threonine 367 and threonine 370. Polar residues predominate over residues 367 to 378 (TPNTPRQNTSTP). Residues 389 to 423 (LDDLKVSELKTELKLRGLPVSGTKPDLIERLKPYQ) form the SAP domain. Residues 528–540 (LSSSPLRMTNNED) are compositionally biased toward polar residues. Residues serine 541 and serine 543 each carry the phosphoserine modification. Over residues 541–550 (SLSPTSSTLS) the composition is skewed to low complexity. A coiled-coil region spans residues 545–601 (TSSTLSNLELDAAEKDRKLQEKEKQIEELKRKLEQEQKLVEVLKMQLEVEKRGQQQR). The segment at 563–591 (LQEKEKQIEELKRKLEQEQKLVEVLKMQL) is required for interaction with itself and with MRTFA. 2 disordered regions span residues 595–655 (KRGQ…QPVS) and 829–886 (NAPL…STQA). Lysine 628 participates in a covalent cross-link: Glycyl lysine isopeptide (Lys-Gly) (interchain with G-Cter in SUMO1). The segment covering 829 to 838 (NAPLPSLQNG) has biased composition (polar residues). The span at 867–879 (KTKDPPRYEEAIK) shows a compositional bias: basic and acidic residues. Residue serine 921 is modified to Phosphoserine.

As to quaternary structure, interacts with MRTFA and SRF. O-glycosylated.

Its subcellular location is the nucleus. Acts as a transcriptional coactivator of serum response factor (SRF). Required for skeletal myogenic differentiation. The polypeptide is Myocardin-related transcription factor B (Homo sapiens (Human)).